The primary structure comprises 425 residues: tRNA(Ile)-lysidine synthase (425 aa).

27-32 (SGGLDS) is a binding site for ATP.

Belongs to the tRNA(Ile)-lysidine synthase family.

The protein localises to the cytoplasm. The enzyme catalyses cytidine(34) in tRNA(Ile2) + L-lysine + ATP = lysidine(34) in tRNA(Ile2) + AMP + diphosphate + H(+). Ligates lysine onto the cytidine present at position 34 of the AUA codon-specific tRNA(Ile) that contains the anticodon CAU, in an ATP-dependent manner. Cytidine is converted to lysidine, thus changing the amino acid specificity of the tRNA from methionine to isoleucine. The sequence is that of tRNA(Ile)-lysidine synthase from Streptococcus gordonii (strain Challis / ATCC 35105 / BCRC 15272 / CH1 / DL1 / V288).